A 539-amino-acid chain; its full sequence is MIO-dependent tyrosine 2,3-aminomutase (539 aa).

The active-site Proton donor/acceptor is Tyr63. His93 provides a ligand contact to substrate. A cross-link (5-imidazolinone (Ala-Gly)) is located at residues 152–154; it reads ASG. The residue at position 153 (Ser153) is a 2,3-didehydroalanine (Ser). Residues Asn205 and Arg311 each coordinate substrate.

It belongs to the TAL/TAM family. As to quaternary structure, homotetramer; dimer of dimers. In terms of processing, contains an active site 4-methylidene-imidazol-5-one (MIO), which is formed autocatalytically by cyclization and dehydration of residues Ala-Ser-Gly.

The enzyme catalyses L-tyrosine = 3-amino-3-(4-hydroxyphenyl)propanoate. The catalysed reaction is L-tyrosine = (E)-4-coumarate + NH4(+). In terms of biological role, involved in the biosynthesis of the enediyne antitumor antibiotic C-1027. Catalyzes the MIO-dependent deamination of L-tyrosine generating the corresponding alpha,beta-unsaturated acid, (S)-beta-tyrosine. The sequence is that of MIO-dependent tyrosine 2,3-aminomutase from Streptomyces globisporus.